We begin with the raw amino-acid sequence, 136 residues long: Large-conductance mechanosensitive channel (136 aa).

2 helical membrane passes run 10 to 30 (FAMR…AAFG) and 76 to 96 (GVFI…FMAI).

This sequence belongs to the MscL family. In terms of assembly, homopentamer.

The protein localises to the cell inner membrane. Functionally, channel that opens in response to stretch forces in the membrane lipid bilayer. May participate in the regulation of osmotic pressure changes within the cell. The protein is Large-conductance mechanosensitive channel of Escherichia coli O127:H6 (strain E2348/69 / EPEC).